A 494-amino-acid polypeptide reads, in one-letter code: Glycerol kinase (494 aa).

Residue Thr13 coordinates ADP. ATP contacts are provided by Thr13, Thr14, and Ser15. A sn-glycerol 3-phosphate-binding site is contributed by Thr13. An ADP-binding site is contributed by Arg17. Sn-glycerol 3-phosphate contacts are provided by Arg83, Glu84, Tyr135, and Asp244. Positions 83, 84, 135, 244, and 245 each coordinate glycerol. Residues Thr266 and Gly309 each contribute to the ADP site. Thr266, Gly309, Gln313, and Gly410 together coordinate ATP. Residues Gly410 and Asn414 each contribute to the ADP site.

It belongs to the FGGY kinase family.

It carries out the reaction glycerol + ATP = sn-glycerol 3-phosphate + ADP + H(+). It functions in the pathway polyol metabolism; glycerol degradation via glycerol kinase pathway; sn-glycerol 3-phosphate from glycerol: step 1/1. With respect to regulation, inhibited by fructose 1,6-bisphosphate (FBP). In terms of biological role, key enzyme in the regulation of glycerol uptake and metabolism. Catalyzes the phosphorylation of glycerol to yield sn-glycerol 3-phosphate. The sequence is that of Glycerol kinase from Shewanella sp. (strain ANA-3).